A 450-amino-acid polypeptide reads, in one-letter code: Probable glycine dehydrogenase (decarboxylating) subunit 1 (450 aa).

This sequence belongs to the GcvP family. N-terminal subunit subfamily. As to quaternary structure, the glycine cleavage system is composed of four proteins: P, T, L and H. In this organism, the P 'protein' is a heterodimer of two subunits.

It carries out the reaction N(6)-[(R)-lipoyl]-L-lysyl-[glycine-cleavage complex H protein] + glycine + H(+) = N(6)-[(R)-S(8)-aminomethyldihydrolipoyl]-L-lysyl-[glycine-cleavage complex H protein] + CO2. Its function is as follows. The glycine cleavage system catalyzes the degradation of glycine. The P protein binds the alpha-amino group of glycine through its pyridoxal phosphate cofactor; CO(2) is released and the remaining methylamine moiety is then transferred to the lipoamide cofactor of the H protein. The sequence is that of Probable glycine dehydrogenase (decarboxylating) subunit 1 from Staphylococcus haemolyticus (strain JCSC1435).